We begin with the raw amino-acid sequence, 372 residues long: uncharacterized protein (372 aa).

S-adenosyl-L-methionine is bound by residues aspartate 202 and 227-229 (GDF).

The protein belongs to the class I-like SAM-binding methyltransferase superfamily. Cation-independent O-methyltransferase family.

This is an uncharacterized protein from Methanocaldococcus jannaschii (strain ATCC 43067 / DSM 2661 / JAL-1 / JCM 10045 / NBRC 100440) (Methanococcus jannaschii).